A 311-amino-acid chain; its full sequence is Meteorin-like protein (311 aa).

Positions 1–45 are cleaved as a signal peptide; that stretch reads MRGVVWAARRRAGQQWPRSPGPGPGPPPPPPLLLLLLLLLGGASA. C52 and C75 form a disulfide bridge. An N-linked (GlcNAc...) asparagine glycan is attached at N103. 4 cysteine pairs are disulfide-bonded: C107-C143, C188-C260, C191-C284, and C201-C306.

The protein belongs to the meteorin family. As to expression, abundantly expressed in adipose tissue.

The protein resides in the secreted. In terms of biological role, hormone induced following exercise or cold exposure that promotes energy expenditure. Induced either in the skeletal muscle after exercise or in adipose tissue following cold exposure and is present in the circulation. Able to stimulate energy expenditure associated with the browning of the white fat depots and improves glucose tolerance. Does not promote an increase in a thermogenic gene program via direct action on adipocytes, but acts by stimulating several immune cell subtypes to enter the adipose tissue and activate their prothermogenic actions. Stimulates an eosinophil-dependent increase in IL4 expression and promotes alternative activation of adipose tissue macrophages, which are required for the increased expression of the thermogenic and anti-inflammatory gene programs in fat. Required for some cold-induced thermogenic responses, suggesting a role in metabolic adaptations to cold temperatures. The polypeptide is Meteorin-like protein (Metrnl) (Rattus norvegicus (Rat)).